Consider the following 215-residue polypeptide: 3,4-dihydroxy-2-butanone 4-phosphate synthase (215 aa).

Residues 37–38, aspartate 42, 150–154, and glutamate 175 contribute to the D-ribulose 5-phosphate site; these read RE and RRGHT. Glutamate 38 is a Mg(2+) binding site. Histidine 153 lines the Mg(2+) pocket.

Belongs to the DHBP synthase family. In terms of assembly, homodimer. Mg(2+) is required as a cofactor. Requires Mn(2+) as cofactor.

The enzyme catalyses D-ribulose 5-phosphate = (2S)-2-hydroxy-3-oxobutyl phosphate + formate + H(+). It functions in the pathway cofactor biosynthesis; riboflavin biosynthesis; 2-hydroxy-3-oxobutyl phosphate from D-ribulose 5-phosphate: step 1/1. In terms of biological role, catalyzes the conversion of D-ribulose 5-phosphate to formate and 3,4-dihydroxy-2-butanone 4-phosphate. This chain is 3,4-dihydroxy-2-butanone 4-phosphate synthase, found in Desulfatibacillum aliphaticivorans.